The sequence spans 559 residues: DNA primase (559 aa).

The segment at 37-61 (CPFHEERSASFSVNQVKGFYYCFGC) adopts a CHC2-type zinc-finger fold. Positions 246-327 (KQVIVTEGYL…KGGVILFENN (82 aa)) constitute a Toprim domain. Mg(2+) is bound by residues Glu252, Asp296, and Asp298.

The protein belongs to the DnaG primase family. Monomer. Interacts with DnaB. The cofactor is Zn(2+). Mg(2+) is required as a cofactor.

It carries out the reaction ssDNA + n NTP = ssDNA/pppN(pN)n-1 hybrid + (n-1) diphosphate.. Its function is as follows. RNA polymerase that catalyzes the synthesis of short RNA molecules used as primers for DNA polymerase during DNA replication. The chain is DNA primase from Helicobacter pylori (strain J99 / ATCC 700824) (Campylobacter pylori J99).